A 519-amino-acid chain; its full sequence is MSVSVLSPSRRLGGVSGILQVTSLLILLLLLIKAAQLYLHRQWLLKALQQFPCPPSHWLFGHIQEFQHDQELQRIQERVKTFPSACPYWIWGGKVRVQLYDPDYMKVILGRSDPKSHGSYKFLAPRIGYGLLLLNGQTWFQHRRMLTPAFHNDILKPYVGLMADSVRVMLDKWEELLGQDSPLEVFQHVSLMTLDTIMKSAFSHQGSIQVDRNSQSYIQAISDLNSLVFCCMRNAFHENDTIYSLTSAGRWTHRACQLAHQHTDQVIQLRKAQLQKEGELEKIKRKRHLDFLDILLLAKMENGSILSDKDLRAEVDTFMFEGHDTTASGISWILYALATHPKHQERCREEIHGLLGDGASITWNHLDQMPYTTMCIKEALRLYPPVPGIGRELSTPVTFPDGRSLPKGIMVLLSIYGLHHNPKVWPNLEVFDPSRFAPGSAQHSHAFLPFSGGSRNCIGKQFAMNQLKVARALTLLRFELLPDPTRIPIPMARLVLKSKNGIHLRLRRLPNPCEDKDQL.

The propeptide occupies 1–4; sequence MSVS. Glutamate 321 is a binding site for heme. The residue at position 440 (serine 440) is a Phosphoserine. Cysteine 457 provides a ligand contact to heme.

Belongs to the cytochrome P450 family.

The protein localises to the endoplasmic reticulum membrane. The protein resides in the microsome membrane. It carries out the reaction an omega-methyl-long-chain fatty acid + reduced [NADPH--hemoprotein reductase] + O2 = an omega-hydroxy-long-chain fatty acid + oxidized [NADPH--hemoprotein reductase] + H2O + H(+). Catalyzes the omega- and (omega-1)-hydroxylation of various fatty acids such as laurate and palmitate. Shows no activity towards arachidonic acid and prostaglandin A1. Lacks functional activity in the kidney and does not contribute to renal 20-hydroxyeicosatetraenoic acid (20-HETE) biosynthesis. The protein is Cytochrome P450 4A22 (CYP4A22) of Homo sapiens (Human).